Reading from the N-terminus, the 357-residue chain is Phosphoribosylformylglycinamidine cyclo-ligase (357 aa).

Belongs to the AIR synthase family.

It localises to the cytoplasm. The catalysed reaction is 2-formamido-N(1)-(5-O-phospho-beta-D-ribosyl)acetamidine + ATP = 5-amino-1-(5-phospho-beta-D-ribosyl)imidazole + ADP + phosphate + H(+). The protein operates within purine metabolism; IMP biosynthesis via de novo pathway; 5-amino-1-(5-phospho-D-ribosyl)imidazole from N(2)-formyl-N(1)-(5-phospho-D-ribosyl)glycinamide: step 2/2. The chain is Phosphoribosylformylglycinamidine cyclo-ligase from Rhodopseudomonas palustris (strain BisB18).